The chain runs to 146 residues: Snake venom vascular endothelial growth factor toxin TfsvVEGF (146 aa).

The first 24 residues, 1-24 (MAAYLLAVAILFCIQGWPSGTVQG), serve as a signal peptide directing secretion. Glutamine 25 carries the pyrrolidone carboxylic acid modification. 3 cysteine pairs are disulfide-bonded: cysteine 38/cysteine 80, cysteine 69/cysteine 115, and cysteine 73/cysteine 117. The segment covering 118–139 (RPRSPGDVNNGKDKRNPEEGGP) has biased composition (basic and acidic residues). The tract at residues 118 to 146 (RPRSPGDVNNGKDKRNPEEGGPRARFPFV) is disordered.

Belongs to the PDGF/VEGF growth factor family. Snake venom VEGF subfamily. In terms of assembly, homodimer; disulfide-linked. Interacts with VEGF receptor-1 (FLT1) with a high affinity, whereas it binds to VEGF receptor-2 (KDR) with a low affinity. Does not bind VEGF receptor-3 (FLT4). In terms of tissue distribution, expressed by the venom gland.

It localises to the secreted. Snake venom VEGFs may contribute to venom dispersion and prey subjugation by inducing vascular permeability and hypotension. This protein strongly increases vascular permeability, and weakly stimulates angiogenesis. Interacts with VEGF receptor-1 (FLT1) with a high affinity, whereas it binds to VEGF receptor-2 (KDR) with a low affinity. Stimulates autophosphorylation of VEGF receptor-1 (VEGFR-1/FLT1), and VEGF receptor-2 (VEGFR-2/KDR). This is Snake venom vascular endothelial growth factor toxin TfsvVEGF from Protobothrops flavoviridis (Habu).